We begin with the raw amino-acid sequence, 412 residues long: Argininosuccinate synthase (412 aa).

10–18 (AYSGGLDTS) serves as a coordination point for ATP. Position 89 (tyrosine 89) interacts with L-citrulline. Glycine 119 is a binding site for ATP. The L-aspartate site is built by threonine 121, asparagine 125, and aspartate 126. Asparagine 125 provides a ligand contact to L-citrulline. L-citrulline is bound by residues arginine 129, serine 177, glutamate 261, and tyrosine 273.

This sequence belongs to the argininosuccinate synthase family. Type 1 subfamily. As to quaternary structure, homotetramer.

It is found in the cytoplasm. It carries out the reaction L-citrulline + L-aspartate + ATP = 2-(N(omega)-L-arginino)succinate + AMP + diphosphate + H(+). The protein operates within amino-acid biosynthesis; L-arginine biosynthesis; L-arginine from L-ornithine and carbamoyl phosphate: step 2/3. The polypeptide is Argininosuccinate synthase (Bifidobacterium longum (strain DJO10A)).